A 113-amino-acid polypeptide reads, in one-letter code: Ig heavy chain V-III region T957 (113 aa).

The Ig-like domain occupies 1 to 113; sequence EVKLEESGGG…YWGQGTLVTV (113 aa). Cys22 and Cys98 form a disulfide bridge.

The polypeptide is Ig heavy chain V-III region T957 (Mus musculus (Mouse)).